The following is a 448-amino-acid chain: C4-dicarboxylate transport protein (448 aa).

The next 8 helical transmembrane spans lie at 20–38 (LYFQ…GHFY), 53–75 (IRLV…IAGM), 88–110 (AMIY…ANTV), 161–178 (ILQV…LGIV), 199–220 (LVAI…FTIG), 230–252 (LAML…LGAV), 325–347 (LFIA…LLVA), and 362–384 (FITL…ALIL).

Belongs to the dicarboxylate/amino acid:cation symporter (DAACS) (TC 2.A.23) family.

The protein localises to the cell inner membrane. Functionally, responsible for the transport of dicarboxylates such as succinate, fumarate, and malate from the periplasm across the membrane. This is C4-dicarboxylate transport protein from Agrobacterium fabrum (strain C58 / ATCC 33970) (Agrobacterium tumefaciens (strain C58)).